Reading from the N-terminus, the 253-residue chain is GTP cyclohydrolase III 2 (253 aa).

The segment at 102 to 125 (LRDAGSAQDENRQEALSHRSPPGF) is disordered.

This sequence belongs to the archaeal-type GTP cyclohydrolase family.

The enzyme catalyses GTP + 3 H2O = 2-amino-5-formylamino-6-(5-phospho-D-ribosylamino)pyrimidin-4(3H)-one + 2 phosphate + 2 H(+). Its function is as follows. Catalyzes the formation of 2-amino-5-formylamino-6-ribofuranosylamino-4(3H)-pyrimidinone ribonucleotide monophosphate and inorganic phosphate from GTP. Also has an independent pyrophosphate phosphohydrolase activity. In Halobacterium salinarum (strain ATCC 700922 / JCM 11081 / NRC-1) (Halobacterium halobium), this protein is GTP cyclohydrolase III 2 (gch32).